Reading from the N-terminus, the 234-residue chain is Phosphoglycolate phosphatase (234 aa).

Aspartate 8 serves as the catalytic Nucleophile. Aspartate 8 and aspartate 10 together coordinate Mg(2+). Position 157 (lysine 157) interacts with substrate. Residues aspartate 180 and aspartate 184 each contribute to the Mg(2+) site.

This sequence belongs to the archaeal SPP-like hydrolase family. Mg(2+) serves as cofactor.

The catalysed reaction is 2-phosphoglycolate + H2O = glycolate + phosphate. Functionally, catalyzes the dephosphorylation of 2-phosphoglycolate. The sequence is that of Phosphoglycolate phosphatase from Methanoculleus marisnigri (strain ATCC 35101 / DSM 1498 / JR1).